We begin with the raw amino-acid sequence, 122 residues long: MIQQESRLKVADNSGARELLTIKVLGGSGRKYAYIGDIIVATVKQATPGGVVKKGDVVKAVVVRTKSGARRPDGSYIKFDENAAVIIKDDKSPRGTRIFGPVARELRDSNFMKIVSLAPEVL.

Belongs to the universal ribosomal protein uL14 family. In terms of assembly, part of the 50S ribosomal subunit. Forms a cluster with proteins L3 and L19. In the 70S ribosome, L14 and L19 interact and together make contacts with the 16S rRNA in bridges B5 and B8.

Its function is as follows. Binds to 23S rRNA. Forms part of two intersubunit bridges in the 70S ribosome. This chain is Large ribosomal subunit protein uL14, found in Bacillus mycoides (strain KBAB4) (Bacillus weihenstephanensis).